The sequence spans 312 residues: DNA-directed RNA polymerase subunit alpha (312 aa).

Positions 1-226 are alpha N-terminal domain (alpha-NTD); sequence MIEFEKPIIT…EHLNLFTDLT (226 aa). The segment at 242-312 is alpha C-terminal domain (alpha-CTD); sequence NDEKLLDRTI…DLGLGLKNDK (71 aa).

It belongs to the RNA polymerase alpha chain family. As to quaternary structure, homodimer. The RNAP catalytic core consists of 2 alpha, 1 beta, 1 beta' and 1 omega subunit. When a sigma factor is associated with the core the holoenzyme is formed, which can initiate transcription.

It carries out the reaction RNA(n) + a ribonucleoside 5'-triphosphate = RNA(n+1) + diphosphate. Functionally, DNA-dependent RNA polymerase catalyzes the transcription of DNA into RNA using the four ribonucleoside triphosphates as substrates. The sequence is that of DNA-directed RNA polymerase subunit alpha from Streptococcus thermophilus (strain CNRZ 1066).